A 284-amino-acid chain; its full sequence is NAD kinase (284 aa).

Asp71 (proton acceptor) is an active-site residue. NAD(+) is bound by residues 71-72, 144-145, Asp174, 185-190, and Gln242; these read DG, ND, and TAYNLS.

Belongs to the NAD kinase family. The cofactor is a divalent metal cation.

Its subcellular location is the cytoplasm. The enzyme catalyses NAD(+) + ATP = ADP + NADP(+) + H(+). Involved in the regulation of the intracellular balance of NAD and NADP, and is a key enzyme in the biosynthesis of NADP. Catalyzes specifically the phosphorylation on 2'-hydroxyl of the adenosine moiety of NAD to yield NADP. This Sulfurimonas denitrificans (strain ATCC 33889 / DSM 1251) (Thiomicrospira denitrificans (strain ATCC 33889 / DSM 1251)) protein is NAD kinase.